Reading from the N-terminus, the 202-residue chain is Small ribosomal subunit protein uS4 (202 aa).

Residues 93 to 156 (RRLDNMVYRL…KDLKIISEAV (64 aa)) enclose the S4 RNA-binding domain.

Belongs to the universal ribosomal protein uS4 family. As to quaternary structure, part of the 30S ribosomal subunit. Contacts protein S5. The interaction surface between S4 and S5 is involved in control of translational fidelity.

In terms of biological role, one of the primary rRNA binding proteins, it binds directly to 16S rRNA where it nucleates assembly of the body of the 30S subunit. Functionally, with S5 and S12 plays an important role in translational accuracy. This chain is Small ribosomal subunit protein uS4, found in Pediococcus pentosaceus (strain ATCC 25745 / CCUG 21536 / LMG 10740 / 183-1w).